We begin with the raw amino-acid sequence, 366 residues long: Phospho-N-acetylmuramoyl-pentapeptide-transferase (366 aa).

The next 10 membrane-spanning stretches (helical) occupy residues 3–23 (QIFI…PVLI), 55–75 (IAIL…GLVF), 80–100 (PGVS…VGFA), 118–138 (AKLI…LQFP), 161–181 (IAVG…NIVI), 197–217 (LASG…FWQF), 235–255 (PLDL…FLWW), 262–282 (IFMG…LSIT), 287–307 (LLMI…VIQV), and 341–361 (FWLL…GEWL).

Belongs to the glycosyltransferase 4 family. MraY subfamily. Mg(2+) is required as a cofactor.

It localises to the cell membrane. It carries out the reaction UDP-N-acetyl-alpha-D-muramoyl-L-alanyl-gamma-D-glutamyl-meso-2,6-diaminopimeloyl-D-alanyl-D-alanine + di-trans,octa-cis-undecaprenyl phosphate = di-trans,octa-cis-undecaprenyl diphospho-N-acetyl-alpha-D-muramoyl-L-alanyl-D-glutamyl-meso-2,6-diaminopimeloyl-D-alanyl-D-alanine + UMP. Its pathway is cell wall biogenesis; peptidoglycan biosynthesis. Functionally, catalyzes the initial step of the lipid cycle reactions in the biosynthesis of the cell wall peptidoglycan: transfers peptidoglycan precursor phospho-MurNAc-pentapeptide from UDP-MurNAc-pentapeptide onto the lipid carrier undecaprenyl phosphate, yielding undecaprenyl-pyrophosphoryl-MurNAc-pentapeptide, known as lipid I. The sequence is that of Phospho-N-acetylmuramoyl-pentapeptide-transferase from Corynebacterium urealyticum (strain ATCC 43042 / DSM 7109).